We begin with the raw amino-acid sequence, 237 residues long: 1-(5-phosphoribosyl)-5-[(5-phosphoribosylamino)methylideneamino] imidazole-4-carboxamide isomerase (237 aa).

The active-site Proton acceptor is Asp-8. The Proton donor role is filled by Asp-129.

The protein belongs to the HisA/HisF family.

The protein localises to the cytoplasm. The enzyme catalyses 1-(5-phospho-beta-D-ribosyl)-5-[(5-phospho-beta-D-ribosylamino)methylideneamino]imidazole-4-carboxamide = 5-[(5-phospho-1-deoxy-D-ribulos-1-ylimino)methylamino]-1-(5-phospho-beta-D-ribosyl)imidazole-4-carboxamide. It participates in amino-acid biosynthesis; L-histidine biosynthesis; L-histidine from 5-phospho-alpha-D-ribose 1-diphosphate: step 4/9. This is 1-(5-phosphoribosyl)-5-[(5-phosphoribosylamino)methylideneamino] imidazole-4-carboxamide isomerase from Clostridium botulinum (strain Alaska E43 / Type E3).